Consider the following 418-residue polypeptide: MSKVDFNKETGPREVFCGLTSIVWLHRRMPDAFFLVVGSRTCAHLIQSAAGVMIFAEPRFGTAILEEKDLAGLADAHEELDRVVNDLISRRPEIKTLFLVGSCPSEVIKLDLATVAEKLNLRFSGQVRFVNYSGSGIETTFTQGEDGALKALIPLMNSTDDEKLLLVGTIANNVEDRFKKIFNSIGINNVESFPPRQSTELPKIGKNTKVILTQPYLSDTVRDLKHRGCEIIYAPFPLGVEGSTKWVLAAAAAFKIPELKVHEVIAPLANRARQALQKHTEILRGKKLFLLPESQLEISLARFLHNECEMELIEVGTPYLNKDLMEEELNLLPDDTKIVEGQHVEKQLDRVRASCPDLVVCGMGLANPLEAEGISTKWSIEMVFSPIHGIDQAADLAELFSRPLTRNQILTSKTLATY.

[4Fe-4S] cluster is bound by residues Cys-17, Cys-42, and Cys-103.

The protein belongs to the BchN/ChlN family. As to quaternary structure, protochlorophyllide reductase is composed of three subunits; ChlL, ChlN and ChlB. Forms a heterotetramer of two ChlB and two ChlN subunits. [4Fe-4S] cluster is required as a cofactor.

The enzyme catalyses chlorophyllide a + oxidized 2[4Fe-4S]-[ferredoxin] + 2 ADP + 2 phosphate = protochlorophyllide a + reduced 2[4Fe-4S]-[ferredoxin] + 2 ATP + 2 H2O. The protein operates within porphyrin-containing compound metabolism; chlorophyll biosynthesis (light-independent). Its function is as follows. Component of the dark-operative protochlorophyllide reductase (DPOR) that uses Mg-ATP and reduced ferredoxin to reduce ring D of protochlorophyllide (Pchlide) to form chlorophyllide a (Chlide). This reaction is light-independent. The NB-protein (ChlN-ChlB) is the catalytic component of the complex. The chain is Light-independent protochlorophyllide reductase subunit N from Prochlorococcus marinus (strain MIT 9515).